The chain runs to 252 residues: 3-dehydroquinate dehydratase (252 aa).

3-dehydroquinate contacts are provided by residues S21, 46 to 48, and R82; that span reads EWR. The Proton donor/acceptor role is filled by H143. K170 (schiff-base intermediate with substrate) is an active-site residue. 3-dehydroquinate is bound by residues R213, S232, and Q236.

The protein belongs to the type-I 3-dehydroquinase family. Homodimer.

It catalyses the reaction 3-dehydroquinate = 3-dehydroshikimate + H2O. The protein operates within metabolic intermediate biosynthesis; chorismate biosynthesis; chorismate from D-erythrose 4-phosphate and phosphoenolpyruvate: step 3/7. Involved in the third step of the chorismate pathway, which leads to the biosynthesis of aromatic amino acids. Catalyzes the cis-dehydration of 3-dehydroquinate (DHQ) and introduces the first double bond of the aromatic ring to yield 3-dehydroshikimate. The sequence is that of 3-dehydroquinate dehydratase from Shigella boydii serotype 4 (strain Sb227).